Reading from the N-terminus, the 109-residue chain is Large ribosomal subunit protein uL24 (109 aa).

Belongs to the universal ribosomal protein uL24 family. In terms of assembly, part of the 50S ribosomal subunit.

In terms of biological role, one of two assembly initiator proteins, it binds directly to the 5'-end of the 23S rRNA, where it nucleates assembly of the 50S subunit. Functionally, one of the proteins that surrounds the polypeptide exit tunnel on the outside of the subunit. The sequence is that of Large ribosomal subunit protein uL24 from Syntrophobacter fumaroxidans (strain DSM 10017 / MPOB).